The sequence spans 424 residues: MTDDQDVHLNSLDFQPISLLSFEGVAPYGPSCAQHKCHRCGPVLIDPGTCVYNNASMVLDNGAWAFHPGSYSTDLVANRSVEFLGDAIKAGEPFFLGVTPIAPHAETVGDAFEAPVPAKRHENLFLDVKVPRSPSFNAGAAGAVGYFRNLPKLAHDQIDYMDTFYRRRLQSLQAVDDLIEDIMAKLESHPDVLANTYLFYTSDNGYHIGQHRLPPGKTCGIEEDVNIPFIARGPGIAAGHVGRFPTSHTDLVPTIFELAGIPLRDEFDGEPMPLKGQRQSNDALNRNTYKTLRVDTDDYAFMYTVWCTNEHELYDMKMNNLYGSNSTTSSFDIPQLSARLDTLLLTLKACKGIACRRPWQTLFPTGNVNGLVDAMDPLHDSFFLVSQPRVTFTTCSLGYNAEVEGPLSPVIFGAADETAIEPRQ.

The Ca(2+) site is built by Asp-13, Asp-203, and Asn-204.

This sequence belongs to the sulfatase family. The cofactor is Ca(2+).

Sulfatase; part of the gene cluster that mediates the biosynthesis of pyrrolopyrazines, secondary metabolites showing insecticidal activity. The role of ppz1 within the pathway has still to be determined. The single multifunctional NRPS ppzA is sufficient to produce peramine via condensation of 1-pyrroline-5-carboxylate and arginine, N-methylation of the alpha-amino group of arginine and reduction of the thioester and the cyclization to form an iminium ion resulting in release from the peptide synthetase. Deprotonation of this intermediate and oxidation of the pyrroline ring would give rise to peramine. In Epichloe species that produce only peramine, the peramine synthetase gene is not localized in a gene cluster, in contrast to Metarhizium species that contain additional pyrrolopyrazine biosynthesis genes. The 2-oxoglutarate-Fe(II) type oxidoreductase ppzC hydroxylates peramine to yield the newly identified compound 8-hydroxyperamine whereas ppzD converts L-proline into trans-4-hydroxy-L-proline, a precursor of peramine biosynthesis. This chain is Sulfatase ppz1, found in Metarhizium majus (strain ARSEF 297).